The primary structure comprises 105 residues: U-scoloptoxin(05)-Sa2a (105 aa).

Residues 1–24 (MKEAVKMSCLCIFLFLFLFSLTDA) form the signal peptide. Positions 79–105 (HVPESNQKDGKVSTHMSSCNTDGCNAN) are disordered. The span at 92–105 (THMSSCNTDGCNAN) shows a compositional bias: polar residues.

It belongs to the scoloptoxin-05 family. In terms of processing, contains 4 disulfide bonds. In terms of tissue distribution, expressed by the venom gland.

It is found in the secreted. The sequence is that of U-scoloptoxin(05)-Sa2a from Scolopendra alternans (Florida Keys giant centipede).